We begin with the raw amino-acid sequence, 545 residues long: Ribulokinase (545 aa).

The protein belongs to the ribulokinase family.

The enzyme catalyses D-ribulose + ATP = D-ribulose 5-phosphate + ADP + H(+). The catalysed reaction is L-ribulose + ATP = L-ribulose 5-phosphate + ADP + H(+). It functions in the pathway carbohydrate degradation; L-arabinose degradation via L-ribulose; D-xylulose 5-phosphate from L-arabinose (bacterial route): step 2/3. The chain is Ribulokinase from Staphylococcus aureus (strain MRSA252).